The chain runs to 1028 residues: Carbamoyl phosphate synthase large chain (1028 aa).

A carboxyphosphate synthetic domain region spans residues 1–409 (MPPRRDLKKI…ALMKALRGLE (409 aa)). ATP is bound by residues Arg-129, Arg-169, Gly-175, Gly-176, Glu-208, Val-210, Glu-215, Gly-241, Val-242, His-243, Gln-285, and Glu-299. The ATP-grasp 1 domain maps to 133–328 (QEAMQRIGLE…IAKIAALLAV (196 aa)). Gln-285, Glu-299, and Asn-301 together coordinate Mg(2+). Mn(2+)-binding residues include Gln-285, Glu-299, and Asn-301. An oligomerization domain region spans residues 410-549 (RDVRALAGVR…YSTYELEDEV (140 aa)). A carbamoyl phosphate synthetic domain region spans residues 550–933 (WPSQKPKVVI…AYYKAELGAG (384 aa)). Residues 674 to 866 (HALCQRLGIP…LAKLAALIAV (193 aa)) form the ATP-grasp 2 domain. ATP-binding residues include Arg-710, Arg-750, Leu-752, Glu-757, Gly-782, Val-783, His-784, Ser-785, Gln-825, and Glu-837. Mg(2+) contacts are provided by Gln-825, Glu-837, and Asn-839. Residues Gln-825, Glu-837, and Asn-839 each contribute to the Mn(2+) site. The MGS-like domain maps to 934-1028 (QRLPLSGRVR…QDWHQKAPRG (95 aa)). Positions 934 to 1028 (QRLPLSGRVR…QDWHQKAPRG (95 aa)) are allosteric domain.

It belongs to the CarB family. Composed of two chains; the small (or glutamine) chain promotes the hydrolysis of glutamine to ammonia, which is used by the large (or ammonia) chain to synthesize carbamoyl phosphate. Tetramer of heterodimers (alpha,beta)4. It depends on Mg(2+) as a cofactor. Mn(2+) is required as a cofactor.

The enzyme catalyses hydrogencarbonate + L-glutamine + 2 ATP + H2O = carbamoyl phosphate + L-glutamate + 2 ADP + phosphate + 2 H(+). The catalysed reaction is hydrogencarbonate + NH4(+) + 2 ATP = carbamoyl phosphate + 2 ADP + phosphate + 2 H(+). It participates in amino-acid biosynthesis; L-arginine biosynthesis; carbamoyl phosphate from bicarbonate: step 1/1. Its pathway is pyrimidine metabolism; UMP biosynthesis via de novo pathway; (S)-dihydroorotate from bicarbonate: step 1/3. Large subunit of the glutamine-dependent carbamoyl phosphate synthetase (CPSase). CPSase catalyzes the formation of carbamoyl phosphate from the ammonia moiety of glutamine, carbonate, and phosphate donated by ATP, constituting the first step of 2 biosynthetic pathways, one leading to arginine and/or urea and the other to pyrimidine nucleotides. The large subunit (synthetase) binds the substrates ammonia (free or transferred from glutamine from the small subunit), hydrogencarbonate and ATP and carries out an ATP-coupled ligase reaction, activating hydrogencarbonate by forming carboxy phosphate which reacts with ammonia to form carbamoyl phosphate. In Thermus thermophilus (strain ATCC 27634 / DSM 579 / HB8), this protein is Carbamoyl phosphate synthase large chain.